A 201-amino-acid polypeptide reads, in one-letter code: Ras-related protein Rab-9B (201 aa).

Positions 18, 19, 20, 21, 22, 33, 34, 36, 38, and 39 each coordinate GTP. Serine 21 is a Mg(2+) binding site. The Switch 1 signature appears at 31 to 42 (KFDSQAFHTIGV). Serine 34 is subject to Phosphoserine. Residues threonine 39 and aspartate 62 each contribute to the Mg(2+) site. A Switch 2 motif is present at residues 64–78 (AGQERFKSLRTPFYR). GTP-binding residues include glycine 65, asparagine 124, lysine 125, alanine 155, and lysine 156. 2 S-geranylgeranyl cysteine lipidation sites follow: cysteine 200 and cysteine 201.

Belongs to the small GTPase superfamily. Rab family. In terms of assembly, interacts (GTP-bound form) with SGSM1; the GDP-bound form has much lower affinity for SGSM1. The GTP-bound form but not the GDP-bound form interacts with HPS4 and the BLOC-3 complex (heterodimer of HPS1 and HPS4) but does not interact with HPS1 alone. Interacts (GTP-bound form) with NDE1. Requires Mg(2+) as cofactor.

The protein localises to the cell membrane. It localises to the cytoplasmic vesicle. Its subcellular location is the phagosome membrane. The enzyme catalyses GTP + H2O = GDP + phosphate + H(+). Regulated by guanine nucleotide exchange factors (GEFs) which promote the exchange of bound GDP for free GTP. Regulated by GTPase activating proteins (GAPs) which increase the GTP hydrolysis activity. Inhibited by GDP dissociation inhibitors (GDIs). Its function is as follows. The small GTPases Rab are key regulators of intracellular membrane trafficking, from the formation of transport vesicles to their fusion with membranes. Rabs cycle between an inactive GDP-bound form and an active GTP-bound form that is able to recruit to membranes different sets of downstream effectors directly responsible for vesicle formation, movement, tethering and fusion. RAB9B is involved in the transport of proteins between the endosomes and the trans Golgi network. May use NDE1/NDEL1 as an effector to interact with the dynein motor complex in order to control retrograde trafficking of RAB9-associated late endosomes to the TGN. The sequence is that of Ras-related protein Rab-9B (RAB9B) from Pongo abelii (Sumatran orangutan).